The sequence spans 664 residues: L-glutamate oxidase precursor (664 aa).

The segment at residues 1 to 44 is a signal peptide (tat-type signal); that stretch reads MTEDHAVVRSDGGLSRRSFAAVAGTATVATALTSGVAAALPAPA. FAD contacts are provided by alanine 105, glutamate 124, alanine 125, arginine 133, methionine 161, arginine 162, aspartate 638, tryptophan 646, and isoleucine 647.

Belongs to the flavin monoamine oxidase family. LGOX subfamily. The mature enzyme is a heterohexamer composed of 2 alpha chains, 2 beta chains and 2 gamma chains (alpha2beta2gamma2). FAD is required as a cofactor. Post-translationally, predicted to be exported by the Tat system. The position of the signal peptide cleavage has not been experimentally proven. In terms of processing, the precursor form is proteolytically cleaved by an endopeptidase into alpha, beta and gamma chains, which form the stable mature enzyme.

It is found in the secreted. It catalyses the reaction L-glutamate + O2 + H2O = H2O2 + 2-oxoglutarate + NH4(+). With respect to regulation, activity is stimulated in the presence of Mn(2+), Ca(2+) or Mg(2+). Functionally, catalyzes the oxidative deamination of L-glutamate to 2-ketoglutarate along with the production of ammonia and hydrogen peroxide. This Streptomyces viridosporus (strain ATCC 14672 / DSM 40746 / JCM 4963 / KCTC 9882 / NRRL B-12104 / FH 1290) (Streptomyces ghanaensis) protein is L-glutamate oxidase precursor.